We begin with the raw amino-acid sequence, 176 residues long: Macro domain-containing protein mll7730 (176 aa).

A Macro domain is found at methionine 1–arginine 174.

It belongs to the MacroD-type family.

In Mesorhizobium japonicum (strain LMG 29417 / CECT 9101 / MAFF 303099) (Mesorhizobium loti (strain MAFF 303099)), this protein is Macro domain-containing protein mll7730.